A 491-amino-acid polypeptide reads, in one-letter code: MALLRVLCLLAALRRSLCTDTEERLVEYLLDPTRYNKLIRPATNGSQLVTVQLMVSLAQLISVHEREQIMTTNVWLTQEWEDYRLTWKPEDFDNMKKVRLPSKHIWLPDVVLYNNADGMYEVSFYSNAVISYDGSIFWLPPAIYKSACKIEVKHFPFDQQNCTMKFRSWTYDRTEIDLVLKSEVASLDDFTPSGEWDIVALPGRRNENPDDSTYVDITYDFIIRRKPLFYTINLIIPCILITSLAILVFYLPSDCGEKMTLCISVLLALTVFLLLISKIVPPTSLDVPLVGKYLMFTMVLVTFSIVTSVCVLNVHHRSPTTHTMPPWVRTLFLRKLPALLFMKQPQQNCARQRLRQRRQTQERAAAATLFLRAGARACACYANPGAAKAEGLNGYRERQGQGPDPPAPCGCGLEEAVEGVRFIADHMRSEDDDQSVSEDWKYVAMVIDRLFLWIFVFVCVFGTVGMFLQPLFQNYATNSLLQLGQGTPTSK.

An N-terminal signal peptide occupies residues 1 to 18; it reads MALLRVLCLLAALRRSLC. At 19–226 the chain is on the extracellular side; the sequence is TDTEERLVEY…ITYDFIIRRK (208 aa). Asparagine 44 and asparagine 161 each carry an N-linked (GlcNAc...) asparagine glycan. An intrachain disulfide couples cysteine 148 to cysteine 162. The chain crosses the membrane as a helical span at residues 227–251; the sequence is PLFYTINLIIPCILITSLAILVFYL. The Cytoplasmic segment spans residues 252–258; the sequence is PSDCGEK. Residues 259-277 form a helical membrane-spanning segment; the sequence is MTLCISVLLALTVFLLLIS. Topologically, residues 278-292 are extracellular; sequence KIVPPTSLDVPLVGK. The helical transmembrane segment at 293 to 314 threads the bilayer; the sequence is YLMFTMVLVTFSIVTSVCVLNV. The Cytoplasmic portion of the chain corresponds to 315 to 449; sequence HHRSPTTHTM…WKYVAMVIDR (135 aa). A helical transmembrane segment spans residues 450 to 468; that stretch reads LFLWIFVFVCVFGTVGMFL.

It belongs to the ligand-gated ion channel (TC 1.A.9) family. Acetylcholine receptor (TC 1.A.9.1) subfamily. Beta-2/CHRNB2 sub-subfamily. In terms of assembly, neuronal AChR is a heteropentamer composed of two different types of subunits: alpha and beta. CHRNB2/Beta-2 subunit can be combined to CHRNA2/alpha-2, CHRNA3/alpha-3 or CHRNA4/alpha-4, CHRNA5/alpha-5, CHRNA6/alpha-6 and CHRNB3/beta-3 to give rise to functional receptors.

It localises to the synaptic cell membrane. The protein localises to the cell membrane. It catalyses the reaction Ca(2+)(in) = Ca(2+)(out). The catalysed reaction is K(+)(in) = K(+)(out). The enzyme catalyses Na(+)(in) = Na(+)(out). Activated by a myriad of ligands such as acetylcholine, cytisine, nicotine, choline and epibatidine. nAChR activity is inhibited by the antagonist alpha-conotoxins BuIA, PnIA, PnIC, GID and MII, small disulfide-constrained peptides from cone snails. Functionally, component of neuronal acetylcholine receptors (nAChRs) that function as pentameric, ligand-gated cation channels with high calcium permeability among other activities. nAChRs are excitatory neurotrasnmitter receptors formed by a collection of nAChR subunits known to mediate synaptic transmission in the nervous system and the neuromuscular junction. Each nAchR subunit confers differential attributes to channel properties, including activation, deactivation and desensitization kinetics, pH sensitivity, cation permeability, and binding to allosteric modulators. CHRNB2 forms heteropentameric neuronal acetylcholine receptors with CHRNA2, CHRNA3, CHRNA4 and CHRNA6, as well as CHRNA5 and CHRNB3 as accesory subunits. The protein is Neuronal acetylcholine receptor subunit beta-2 (CHRNB2) of Gallus gallus (Chicken).